Here is a 216-residue protein sequence, read N- to C-terminus: Ribosomal RNA large subunit methyltransferase E (216 aa).

S-adenosyl-L-methionine-binding residues include G60, W62, D80, D96, and D121. Residue K161 is the Proton acceptor of the active site.

The protein belongs to the class I-like SAM-binding methyltransferase superfamily. RNA methyltransferase RlmE family.

Its subcellular location is the cytoplasm. The catalysed reaction is uridine(2552) in 23S rRNA + S-adenosyl-L-methionine = 2'-O-methyluridine(2552) in 23S rRNA + S-adenosyl-L-homocysteine + H(+). Functionally, specifically methylates the uridine in position 2552 of 23S rRNA at the 2'-O position of the ribose in the fully assembled 50S ribosomal subunit. The protein is Ribosomal RNA large subunit methyltransferase E of Pseudomonas fluorescens (strain SBW25).